Consider the following 204-residue polypeptide: UPF0637 protein Lm4b_01081 (204 aa).

The protein belongs to the UPF0637 family.

The polypeptide is UPF0637 protein Lm4b_01081 (Listeria monocytogenes serotype 4b (strain CLIP80459)).